The following is a 168-amino-acid chain: Segregation and condensation protein B (168 aa).

Belongs to the ScpB family. In terms of assembly, homodimer. Homodimerization may be required to stabilize the binding of ScpA to the Smc head domains. Component of a cohesin-like complex composed of ScpA, ScpB and the Smc homodimer, in which ScpA and ScpB bind to the head domain of Smc. The presence of the three proteins is required for the association of the complex with DNA.

The protein localises to the cytoplasm. Functionally, participates in chromosomal partition during cell division. May act via the formation of a condensin-like complex containing Smc and ScpA that pull DNA away from mid-cell into both cell halves. The polypeptide is Segregation and condensation protein B (Caldanaerobacter subterraneus subsp. tengcongensis (strain DSM 15242 / JCM 11007 / NBRC 100824 / MB4) (Thermoanaerobacter tengcongensis)).